Reading from the N-terminus, the 531-residue chain is Tyrosine/DOPA decarboxylase 2 (531 aa).

The residue at position 319 (Lys-319) is an N6-(pyridoxal phosphate)lysine.

The protein belongs to the group II decarboxylase family. Homodimer. Requires pyridoxal 5'-phosphate as cofactor. In terms of tissue distribution, predominantly expressed in the roots and stems, while a lower level expression is seen in the sepals and carpels of fully expanded flowers.

It carries out the reaction L-tyrosine + H(+) = tyramine + CO2. The catalysed reaction is L-dopa + H(+) = dopamine + CO2. The enzyme catalyses 5-hydroxy-L-tryptophan + H(+) = serotonin + CO2. Marginally higher substrate specificity for L-DOPA over L-tyrosine. In Papaver somniferum (Opium poppy), this protein is Tyrosine/DOPA decarboxylase 2 (TYDC2).